The sequence spans 334 residues: Protein-methionine-sulfoxide reductase catalytic subunit MsrP (334 aa).

Positions 1–44 form a signal peptide, tat-type signal; the sequence is MKKNQFLKESDVTAESVFFMKRRQVLKALGISATALSLPHAAHA. Residues Asn88, 91–92, Cys146, Thr181, Asn233, Arg238, and 249–251 each bind Mo-molybdopterin; these read YE and GIK.

This sequence belongs to the MsrP family. In terms of assembly, heterodimer of a catalytic subunit (MsrP) and a heme-binding subunit (MsrQ). Mo-molybdopterin is required as a cofactor. In terms of processing, exported by the Tat system. Can also be exported by the Sec system.

It localises to the periplasm. It catalyses the reaction L-methionyl-[protein] + a quinone + H2O = L-methionyl-(S)-S-oxide-[protein] + a quinol. The catalysed reaction is L-methionyl-[protein] + a quinone + H2O = L-methionyl-(R)-S-oxide-[protein] + a quinol. Part of the MsrPQ system that repairs oxidized periplasmic proteins containing methionine sulfoxide residues (Met-O), using respiratory chain electrons. Thus protects these proteins from oxidative-stress damage caused by reactive species of oxygen and chlorine. MsrPQ is essential for the maintenance of envelope integrity under bleach stress, rescuing a wide series of structurally unrelated periplasmic proteins from methionine oxidation, including the primary periplasmic chaperone SurA and the lipoprotein Pal. The catalytic subunit MsrP is non-stereospecific, being able to reduce both (R-) and (S-) diastereoisomers of methionine sulfoxide. Can catalyze the reduction of a variety of substrates in vitro, including dimethyl sulfoxide, trimethylamine N-oxide, phenylmethyl sulfoxide and L-methionine sulfoxide. Cannot reduce cyclic N-oxides. Shows no activity as sulfite oxidase. This chain is Protein-methionine-sulfoxide reductase catalytic subunit MsrP, found in Escherichia coli (strain K12).